Reading from the N-terminus, the 317-residue chain is Ribosomal protein L11 methyltransferase (317 aa).

S-adenosyl-L-methionine-binding residues include threonine 158, glycine 179, aspartate 201, and asparagine 244.

The protein belongs to the methyltransferase superfamily. PrmA family.

It localises to the cytoplasm. The enzyme catalyses L-lysyl-[protein] + 3 S-adenosyl-L-methionine = N(6),N(6),N(6)-trimethyl-L-lysyl-[protein] + 3 S-adenosyl-L-homocysteine + 3 H(+). In terms of biological role, methylates ribosomal protein L11. The polypeptide is Ribosomal protein L11 methyltransferase (Streptococcus uberis (strain ATCC BAA-854 / 0140J)).